The chain runs to 497 residues: MTVFLSFAFLAAILTHIGCSNQRRSPENGGRRYNRIQHGQCAYTFILPEHDGNCRESTTDQYNTNALQRDAPHVGPDFSSQKLQHLEHVMENYTQWLQKIENYIVENMKSEMAQIQQNAVQNHTATMLEIGTSLLSQTAEQTRKLTDVETQVLNQTSRLEIQLLENSLSTYKLEKQLLQQTNEILKIHEKNSLLEHKILEMEGKHKEEWDTLKEERENLQVLVTRQTYIIQELEKQLNRATNNNSVLQKQQLELMDTVHNLVNLCTKEVLLKGGKKEEEKPFRDCADVYQAGFNKSGIYTIYINNMPEPKKVFCNMDVNGGGWTVIQHREDGSLDFQRGWKEYKMGFGNPSGEYWLGNEFIFAITSQRQYTLRIELMDCEGNRAYSQYDRFHIGNEKQNYRLYLKCHTGTAGKQSSLILHGADFSTKDADNDNCMCKCALMLTGGWWFDACGPSNLNGMFYTAGQNHGKLNGIKWHYFKGPSYSLRSTTMMIRPLDF.

An N-terminal signal peptide occupies residues 1-19 (MTVFLSFAFLAAILTHIGC). N-linked (GlcNAc...) asparagine glycosylation is found at Asn92, Asn122, Asn154, Asn243, and Asn294. Positions 158–256 (RLEIQLLENS…LQKQQLELMD (99 aa)) form a coiled coil. In terms of domain architecture, Fibrinogen C-terminal spans 276–496 (KEEEKPFRDC…STTMMIRPLD (221 aa)). Intrachain disulfides connect Cys285–Cys314 and Cys438–Cys451.

As to quaternary structure, homooligomer. Interacts with TEK/TIE2. Interacts with SVEP1/polydom. Interacts with THBD; this interaction significantly inhibits the generation of activated PC and TAFIa/CPB2 by the thrombin/thrombomodulin complex.

It localises to the secreted. Its function is as follows. Binds and activates TIE2 receptor by inducing its tyrosine phosphorylation. Implicated in endothelial developmental processes later and distinct from that of VEGF. Appears to play a crucial role in mediating reciprocal interactions between the endothelium and surrounding matrix and mesenchyme. Mediates blood vessel maturation/stability. It may play an important role in the heart early development. In Canis lupus familiaris (Dog), this protein is Angiopoietin-1 (ANGPT1).